Consider the following 404-residue polypeptide: Chorismate synthase (404 aa).

Position 47 (Arg-47) interacts with NADP(+). FMN-binding positions include 156–158 (RSS), 281–282 (NA), Gly-321, 336–340 (KPTST), and Arg-363.

This sequence belongs to the chorismate synthase family. As to quaternary structure, homotetramer. Requires FMNH2 as cofactor.

It carries out the reaction 5-O-(1-carboxyvinyl)-3-phosphoshikimate = chorismate + phosphate. The protein operates within metabolic intermediate biosynthesis; chorismate biosynthesis; chorismate from D-erythrose 4-phosphate and phosphoenolpyruvate: step 7/7. Functionally, catalyzes the anti-1,4-elimination of the C-3 phosphate and the C-6 proR hydrogen from 5-enolpyruvylshikimate-3-phosphate (EPSP) to yield chorismate, which is the branch point compound that serves as the starting substrate for the three terminal pathways of aromatic amino acid biosynthesis. This reaction introduces a second double bond into the aromatic ring system. This chain is Chorismate synthase, found in Rhodopirellula baltica (strain DSM 10527 / NCIMB 13988 / SH1).